The primary structure comprises 383 residues: 4-hydroxy-3-methylbut-2-en-1-yl diphosphate synthase (flavodoxin) (383 aa).

[4Fe-4S] cluster is bound by residues cysteine 275, cysteine 278, cysteine 310, and glutamate 317.

This sequence belongs to the IspG family. Requires [4Fe-4S] cluster as cofactor.

The catalysed reaction is (2E)-4-hydroxy-3-methylbut-2-enyl diphosphate + oxidized [flavodoxin] + H2O + 2 H(+) = 2-C-methyl-D-erythritol 2,4-cyclic diphosphate + reduced [flavodoxin]. It functions in the pathway isoprenoid biosynthesis; isopentenyl diphosphate biosynthesis via DXP pathway; isopentenyl diphosphate from 1-deoxy-D-xylulose 5-phosphate: step 5/6. In terms of biological role, converts 2C-methyl-D-erythritol 2,4-cyclodiphosphate (ME-2,4cPP) into 1-hydroxy-2-methyl-2-(E)-butenyl 4-diphosphate. This is 4-hydroxy-3-methylbut-2-en-1-yl diphosphate synthase (flavodoxin) from Dinoroseobacter shibae (strain DSM 16493 / NCIMB 14021 / DFL 12).